We begin with the raw amino-acid sequence, 219 residues long: Mediator of RNA polymerase II transcription subunit 20 (219 aa).

Belongs to the Mediator complex subunit 20 family. As to quaternary structure, component of the Mediator complex.

The protein localises to the nucleus. Functionally, component of the Mediator complex, a coactivator involved in the regulated transcription of nearly all RNA polymerase II-dependent genes. Mediator functions as a bridge to convey information from gene-specific regulatory proteins to the basal RNA polymerase II transcription machinery. Mediator is recruited to promoters by direct interactions with regulatory proteins and serves as a scaffold for the assembly of a functional preinitiation complex with RNA polymerase II and the general transcription factors. In Aedes aegypti (Yellowfever mosquito), this protein is Mediator of RNA polymerase II transcription subunit 20 (MED20).